The following is a 215-amino-acid chain: Protein-L-isoaspartate O-methyltransferase (215 aa).

The active site involves Ser-62.

It belongs to the methyltransferase superfamily. L-isoaspartyl/D-aspartyl protein methyltransferase family.

The protein localises to the cytoplasm. It carries out the reaction [protein]-L-isoaspartate + S-adenosyl-L-methionine = [protein]-L-isoaspartate alpha-methyl ester + S-adenosyl-L-homocysteine. Catalyzes the methyl esterification of L-isoaspartyl residues in peptides and proteins that result from spontaneous decomposition of normal L-aspartyl and L-asparaginyl residues. It plays a role in the repair and/or degradation of damaged proteins. The polypeptide is Protein-L-isoaspartate O-methyltransferase (Ruegeria pomeroyi (strain ATCC 700808 / DSM 15171 / DSS-3) (Silicibacter pomeroyi)).